A 346-amino-acid polypeptide reads, in one-letter code: MSFRTIEWRDDKVIMIDQTRLPGEEVYCEYGDYKSVAEAIRGMIIRGAPAIGVAAAMGVALGAREIIADTHESFLRQLDNVCDVLARTRPTAVNLFWAIERMKRVAADNCGGSLDEVREVLKAEAIRIEEEDLALCKAIGRHGAGLIPEGATVLTHCNAGGLATAGYGTALGVIRAAHEAGKNIQVFADETRPWLQGARLTAWELMKDGIPVTLISDNMAGFFMKRGEITCCVVGADRIAANGDTANKIGTYSVAVLAKENNIPFYVAAPTSTLDLSLENGDQIPIEERHAREVTHLQGLPVAPEGIAVRNPAFDVTPARYIAGIITEKGVITGDYTAKLKALVKP.

Substrate contacts are provided by residues 46–48 (RGA), Arg-89, and Gln-196. The active-site Proton donor is the Asp-237. 247-248 (NK) contributes to the substrate binding site.

Belongs to the eIF-2B alpha/beta/delta subunits family. MtnA subfamily.

The enzyme catalyses 5-(methylsulfanyl)-alpha-D-ribose 1-phosphate = 5-(methylsulfanyl)-D-ribulose 1-phosphate. It participates in amino-acid biosynthesis; L-methionine biosynthesis via salvage pathway; L-methionine from S-methyl-5-thio-alpha-D-ribose 1-phosphate: step 1/6. Functionally, catalyzes the interconversion of methylthioribose-1-phosphate (MTR-1-P) into methylthioribulose-1-phosphate (MTRu-1-P). The protein is Methylthioribose-1-phosphate isomerase of Geobacter metallireducens (strain ATCC 53774 / DSM 7210 / GS-15).